The primary structure comprises 229 residues: Ribosome maturation factor RimM (229 aa).

Positions 1-21 (MAGHDSGNAKRGRSPSFGVFV) are disordered. The PRC barrel domain maps to 148 to 229 (ADEFYWVDLI…RVVVDWEADY (82 aa)).

This sequence belongs to the RimM family. In terms of assembly, binds ribosomal protein uS19.

Its subcellular location is the cytoplasm. An accessory protein needed during the final step in the assembly of 30S ribosomal subunit, possibly for assembly of the head region. Essential for efficient processing of 16S rRNA. May be needed both before and after RbfA during the maturation of 16S rRNA. It has affinity for free ribosomal 30S subunits but not for 70S ribosomes. This Burkholderia pseudomallei (strain 1106a) protein is Ribosome maturation factor RimM.